Here is a 279-residue protein sequence, read N- to C-terminus: Phycobilisome rod-core linker polypeptide CpcG1 (279 aa).

Residues 11 to 189 (SSQNQRVEGY…YWRDRQTLNA (179 aa)) enclose the PBS-linker domain.

This sequence belongs to the phycobilisome linker protein family. As to quaternary structure, part of the phycobilisome, a hemidiscoidal structure that is composed of two distinct substructures: a core complex and a number of rods radiating from the core.

It is found in the cellular thylakoid membrane. Rod-core linker protein required for attachment of phycocyanin to allophycocyanin in cores of phycobilisomes. Its function is as follows. Linker polypeptides determine the state of aggregation and the location of the disk-shaped phycobiliprotein units within the phycobilisome and modulate their spectroscopic properties in order to mediate a directed and optimal energy transfer. This chain is Phycobilisome rod-core linker polypeptide CpcG1, found in Nostoc sp. (strain PCC 7120 / SAG 25.82 / UTEX 2576).